Reading from the N-terminus, the 53-residue chain is Sec-independent protein translocase protein TatA (53 aa).

Residues 1–21 (MGMSFSHLLIVLLIIFVLFGA) form a helical membrane-spanning segment.

This sequence belongs to the TatA/E family. The Tat system comprises two distinct complexes: a TatABC complex, containing multiple copies of TatA, TatB and TatC subunits, and a separate TatA complex, containing only TatA subunits. Substrates initially bind to the TatABC complex, which probably triggers association of the separate TatA complex to form the active translocon.

Its subcellular location is the cell inner membrane. In terms of biological role, part of the twin-arginine translocation (Tat) system that transports large folded proteins containing a characteristic twin-arginine motif in their signal peptide across membranes. TatA could form the protein-conducting channel of the Tat system. This Rickettsia africae (strain ESF-5) protein is Sec-independent protein translocase protein TatA.